The sequence spans 631 residues: DNA ligase (631 aa).

NAD(+) contacts are provided by residues 37-41 (DAHYD) and 79-80 (ST). K115 (N6-AMP-lysine intermediate) is an active-site residue. NAD(+) contacts are provided by R131, E160, and K272. Zn(2+) contacts are provided by C361, C364, C377, and C382. Residues 539-630 (DVSSPISGKG…SQSSPEQMSL (92 aa)) form the BRCT domain.

The protein belongs to the NAD-dependent DNA ligase family. LigA subfamily. Mg(2+) serves as cofactor. Mn(2+) is required as a cofactor.

The catalysed reaction is NAD(+) + (deoxyribonucleotide)n-3'-hydroxyl + 5'-phospho-(deoxyribonucleotide)m = (deoxyribonucleotide)n+m + AMP + beta-nicotinamide D-nucleotide.. Functionally, DNA ligase that catalyzes the formation of phosphodiester linkages between 5'-phosphoryl and 3'-hydroxyl groups in double-stranded DNA using NAD as a coenzyme and as the energy source for the reaction. It is essential for DNA replication and repair of damaged DNA. In Desulfatibacillum aliphaticivorans, this protein is DNA ligase.